A 495-amino-acid chain; its full sequence is Geraniol 8-hydroxylase (495 aa).

A helical membrane pass occupies residues 5–25; sequence FLTIAIGFLFTITLYQALNFF. A heme-binding site is contributed by C438.

This sequence belongs to the cytochrome P450 family. Heme is required as a cofactor. As to expression, expressed in leaves, stems and roots.

It localises to the endoplasmic reticulum membrane. It catalyses the reaction (2E)-geraniol + reduced [NADPH--hemoprotein reductase] + O2 = (6E)-8-hydroxygeraniol + oxidized [NADPH--hemoprotein reductase] + H2O + H(+). Its function is as follows. Hydroxylase involved in the biosynthesis of hydroxygeraniol, a precursor of the iridoid monoterpenoid swertiamarin. The protein is Geraniol 8-hydroxylase (CYP76B10) of Swertia mussotii (Felwort).